Consider the following 491-residue polypeptide: Ketol-acid reductoisomerase (NADP(+)) (491 aa).

Positions 15-208 (AQLGKCRFMG…GGHRAGVLES (194 aa)) constitute a KARI N-terminal Rossmann domain. Residues 45 to 48 (CGAQ), R68, R76, S78, and 108 to 110 (DKQ) contribute to the NADP(+) site. The active site involves H132. Residue G158 participates in NADP(+) binding. 2 consecutive KARI C-terminal knotted domains span residues 209–344 (SFVA…TAPQ) and 345–484 (YEGK…MTDM). Mg(2+)-binding residues include D217, E221, E389, and E393. S414 serves as a coordination point for substrate.

It belongs to the ketol-acid reductoisomerase family. Mg(2+) is required as a cofactor.

It catalyses the reaction (2R)-2,3-dihydroxy-3-methylbutanoate + NADP(+) = (2S)-2-acetolactate + NADPH + H(+). The catalysed reaction is (2R,3R)-2,3-dihydroxy-3-methylpentanoate + NADP(+) = (S)-2-ethyl-2-hydroxy-3-oxobutanoate + NADPH + H(+). Its pathway is amino-acid biosynthesis; L-isoleucine biosynthesis; L-isoleucine from 2-oxobutanoate: step 2/4. It participates in amino-acid biosynthesis; L-valine biosynthesis; L-valine from pyruvate: step 2/4. Its function is as follows. Involved in the biosynthesis of branched-chain amino acids (BCAA). Catalyzes an alkyl-migration followed by a ketol-acid reduction of (S)-2-acetolactate (S2AL) to yield (R)-2,3-dihydroxy-isovalerate. In the isomerase reaction, S2AL is rearranged via a Mg-dependent methyl migration to produce 3-hydroxy-3-methyl-2-ketobutyrate (HMKB). In the reductase reaction, this 2-ketoacid undergoes a metal-dependent reduction by NADPH to yield (R)-2,3-dihydroxy-isovalerate. This Escherichia coli O6:K15:H31 (strain 536 / UPEC) protein is Ketol-acid reductoisomerase (NADP(+)).